A 484-amino-acid polypeptide reads, in one-letter code: Ribosome biogenesis protein NOP53 (484 aa).

Disordered stretches follow at residues 1 to 51 (MAAG…WRRL) and 304 to 356 (ESDG…AARK). The residue at position 2 (Ala2) is an N-acetylalanine. Ser29 is modified (phosphoserine). The segment covering 35 to 49 (RRRRRGPRNKKRGWR) has biased composition (basic residues). Residues 148–437 (KEELWEKLAK…SELSGSLRTL (290 aa)) are mediates interaction with CDKN2A/isoform tumor suppressor ARF. Phosphoserine is present on Ser305. Residues 336–348 (PEKRMEKKTEQQR) show a composition bias toward basic and acidic residues. Positions 348 to 392 (RRREKAARKLRVQQAALRAARLQHQELFRLRGIKAQVARRLAELA) are mediates interaction with human herpesvirus 8 protein ORF16. Nucleolar localization signal regions lie at residues 353–401 (AARK…RRIR) and 402–484 (RLAE…EIQL).

This sequence belongs to the NOP53 family. In terms of assembly, homooligomer. Interacts with PTEN; regulates PTEN phosphorylation and increases its stability. Interacts with RPL11; retains RPL11 into the nucleolus. Interacts with CDKN2A/isoform tumor suppressor ARF; the interaction is direct and promotes ARF nucleoplasmic relocalization and ubiquitin-mediated proteasomal degradation. Interacts with NPM1; the interaction is direct and competitive with MYC. Interacts with NF2 (via FERM domain); the interaction is direct. Interacts with p53/TP53 (via the oligomerization region); the interaction is direct and may prevent the MDM2-mediated proteasomal degradation of p53/TP53. Interacts with RIGI; may regulate RIGI through USP15-mediated 'Lys-63'-linked deubiquitination. Interacts with UBTF. Ubiquitin-mediated proteasomal degradation is regulated by c-JUN. It is associated with relocalization to the nucleoplasm and decreased homooligomerization. Post-translationally, phosphorylated upon DNA damage probably by ATM and DNA-PK; may regulate NOP53 degradation.

It is found in the nucleus. The protein resides in the nucleolus. Its subcellular location is the nucleoplasm. In terms of biological role, nucleolar protein which is involved in the integration of the 5S RNP into the ribosomal large subunit during ribosome biogenesis. In ribosome biogenesis, may also play a role in rRNA transcription. Also functions as a nucleolar sensor that regulates the activation of p53/TP53 in response to ribosome biogenesis perturbation, DNA damage and other stress conditions. DNA damage or perturbation of ribosome biogenesis disrupt the interaction between NOP53 and RPL11 allowing RPL11 transport to the nucleoplasm where it can inhibit MDM2 and allow p53/TP53 activation. It may also positively regulate the function of p53/TP53 in cell cycle arrest and apoptosis through direct interaction, preventing its MDM2-dependent ubiquitin-mediated proteasomal degradation. Originally identified as a tumor suppressor, it may also play a role in cell proliferation and apoptosis by positively regulating the stability of PTEN, thereby antagonizing the PI3K-AKT/PKB signaling pathway. May also inhibit cell proliferation and increase apoptosis through its interaction with NF2. May negatively regulate NPM1 by regulating its nucleoplasmic localization, oligomerization and ubiquitin-mediated proteasomal degradation. Thereby, may prevent NPM1 interaction with MYC and negatively regulate transcription mediated by the MYC-NPM1 complex. May also regulate cellular aerobic respiration. In the cellular response to viral infection, may play a role in the attenuation of interferon-beta through the inhibition of RIGI. The protein is Ribosome biogenesis protein NOP53 of Mus musculus (Mouse).